The primary structure comprises 176 residues: Mitochondrial inner membrane protein Mpv17 (176 aa).

Helical transmembrane passes span valine 18–valine 38, threonine 53–leucine 73, glycine 94–leucine 114, and leucine 131–leucine 151.

This sequence belongs to the peroxisomal membrane protein PXMP2/4 family. In terms of tissue distribution, ubiquitous. Expressed in pancreas, kidney, muscle, liver, lung, placenta, brain and heart.

Its subcellular location is the mitochondrion inner membrane. Non-selective channel that modulates the membrane potential under normal conditions and oxidative stress, and is involved in mitochondrial homeostasis. Involved in mitochondrial deoxynucleoside triphosphates (dNTP) pool homeostasis and mitochondrial DNA (mtDNA) maintenance. May be involved in the regulation of reactive oxygen species metabolism and the control of oxidative phosphorylation. The polypeptide is Mitochondrial inner membrane protein Mpv17 (Homo sapiens (Human)).